A 718-amino-acid polypeptide reads, in one-letter code: Catalase-peroxidase (718 aa).

A cross-link (tryptophyl-tyrosyl-methioninium (Trp-Tyr) (with M-246)) is located at residues 92-220 (WHAAGTYRTA…LASVMMGLIY (129 aa)). H93 (proton acceptor) is an active-site residue. The segment at residues 220–246 (YVNPEGVDGHPDPLKTANDVRVTFERM) is a cross-link (tryptophyl-tyrosyl-methioninium (Tyr-Met) (with W-92)). A heme b-binding site is contributed by H261.

This sequence belongs to the peroxidase family. Peroxidase/catalase subfamily. In terms of assembly, homodimer or homotetramer. Requires heme b as cofactor. Formation of the three residue Trp-Tyr-Met cross-link is important for the catalase, but not the peroxidase activity of the enzyme.

The enzyme catalyses H2O2 + AH2 = A + 2 H2O. It carries out the reaction 2 H2O2 = O2 + 2 H2O. Its function is as follows. Bifunctional enzyme with both catalase and broad-spectrum peroxidase activity. This is Catalase-peroxidase from Shewanella halifaxensis (strain HAW-EB4).